A 90-amino-acid polypeptide reads, in one-letter code: Small ribosomal subunit protein bS16 (90 aa).

Belongs to the bacterial ribosomal protein bS16 family.

This chain is Small ribosomal subunit protein bS16, found in Heliobacterium modesticaldum (strain ATCC 51547 / Ice1).